The following is a 536-amino-acid chain: MVLKTIEDNCKSQFDDDLVEDFNNFQTTSSMSSSTTISTEDFNTIEIESTFEICRSGSYTEEPILGENDEFLIDFEMERFLKFLKDKTKQVEKRKEPFSQKEIYAVFQRRIKSELCIETVKKKFQPLLPNAIQTCEFDEETMIRMIYGAGIRIDSVDFWNRFTSKATISLDCYSRLISYSSDSLTLSGTHRSGFTYHWISTPPVTYHRTENKDPNIQEPSPVEFLDVQSSLGSSMKPPILDKPTKLDDPAETRHDCSYSLEEYDSQSRMPRTDAKKSNHKHKYCYEMNSNPRGTVLILSNENFKNMERRVGTKQDEVNLTKLFQKLQYTVICKRNLEAESMLEAIKEFAEMAHTDSIILFLLSHGDGAGSVFGIDDMPVNVMEVSTYLAYHQNLLLKPKWVAVSACRGGKLNMGVPVDGLPALEDKCAPISKFWNLMMSRIMPGTFTSLNADVIISFSTTDGFTSYRDEEAGTWYIKSMCKVFNKHSKTMHLLDILTETGRNVVTKYENVQGNVVLKQAPEILSRLTKQWHFSRSM.

Positions 1–273 are cleaved as a propeptide — removed in mature form by autoprocessing; the sequence is MVLKTIEDNC…DSQSRMPRTD (273 aa). Active-site residues include His364 and Cys406.

It belongs to the peptidase C14A family. As to quaternary structure, heterodimer formed by the tight association of the large subunit p16 and the small subunit p14. Autocatalytic cleavage removes the propeptide and generates the two active subunits p16 and p14 in vitro. Cannot be cleaved by ced-3 in vitro. As to expression, isoform a: Expression is restricted to the late germline pachytene stage of meiosis I in both L4 larvae and adult hermaphrodite gonads. Isoform b: Expression is restricted to the late germline pachytene stage of meiosis I in both L4 larvae and adult hermaphrodite gonads.

The enzyme catalyses Strict requirement for an Asp residue at position P1 and has a preferred cleavage sequence of Tyr-Val-Ala-Asp-|-.. Its activity is regulated as follows. Inhibited by cysteine protease inhibitor iodoacetic acid (CH3COOI) but not by N-[N-(L-3-transcarboxirane-2-carbonyl)-leucyl]-agmatine (E-64) or benzyloxycarbonyl-DEVD-fluoro-methyl ketone (Z-DEVD-FMK). Cysteine protease which, in vitro, cleaves itself and caspase ced-3 into their mature active forms. Also cleaves, in vitro, inactive caspase csp-2 isoform b. Required maternally to induce apoptosis in a subset of cells fated to die during embryogenesis, mostly independently of the ced-9, ced-4 and ced-3 canonical apoptosis pathway. Involved in the degeneration of dopaminergic CEP neurons in response to high Mn(2+) levels. Its function is as follows. Dispensable for regulating apoptosis during embryogenesis. The sequence is that of Caspase A from Caenorhabditis elegans.